The sequence spans 468 residues: UDP-N-acetylmuramate--L-alanine ligase (468 aa).

112–118 (GTHGKTT) is an ATP binding site.

The protein belongs to the MurCDEF family.

The protein resides in the cytoplasm. It catalyses the reaction UDP-N-acetyl-alpha-D-muramate + L-alanine + ATP = UDP-N-acetyl-alpha-D-muramoyl-L-alanine + ADP + phosphate + H(+). It participates in cell wall biogenesis; peptidoglycan biosynthesis. Functionally, cell wall formation. This Bordetella bronchiseptica (strain ATCC BAA-588 / NCTC 13252 / RB50) (Alcaligenes bronchisepticus) protein is UDP-N-acetylmuramate--L-alanine ligase.